Here is a 341-residue protein sequence, read N- to C-terminus: DNA-directed RNA polymerase subunit alpha (341 aa).

The tract at residues 1–237 (MLSLSKNWNA…EQLQLFISFE (237 aa)) is alpha N-terminal domain (alpha-NTD). Residues 247-341 (TDALPFSPYL…LSKRYEDSYN (95 aa)) form an alpha C-terminal domain (alpha-CTD) region.

This sequence belongs to the RNA polymerase alpha chain family. Homodimer. The RNAP catalytic core consists of 2 alpha, 1 beta, 1 beta' and 1 omega subunit. When a sigma factor is associated with the core the holoenzyme is formed, which can initiate transcription.

The enzyme catalyses RNA(n) + a ribonucleoside 5'-triphosphate = RNA(n+1) + diphosphate. Functionally, DNA-dependent RNA polymerase catalyzes the transcription of DNA into RNA using the four ribonucleoside triphosphates as substrates. The sequence is that of DNA-directed RNA polymerase subunit alpha from Rickettsia bellii (strain RML369-C).